The following is a 274-amino-acid chain: Penicillin-insensitive murein endopeptidase (274 aa).

The N-terminal stretch at Met1–Ala19 is a signal peptide. 3 disulfide bridges follow: Cys44-Cys265, Cys187-Cys235, and Cys216-Cys223. Residues His110, His113, Asp120, Asp147, His150, and His211 each coordinate Zn(2+). The interval Pro227 to Ile274 is disordered.

It belongs to the peptidase M74 family. As to quaternary structure, dimer. Zn(2+) serves as cofactor.

It is found in the periplasm. Murein endopeptidase that cleaves the D-alanyl-meso-2,6-diamino-pimelyl amide bond that connects peptidoglycan strands. Likely plays a role in the removal of murein from the sacculus. This is Penicillin-insensitive murein endopeptidase from Escherichia coli O9:H4 (strain HS).